We begin with the raw amino-acid sequence, 382 residues long: Protein PEP-RELATED DEVELOPMENT ARRESTED 1 homolog, chloroplastic (382 aa).

Residues 1–44 constitute a chloroplast transit peptide; sequence MAILPLSISHSLTSALSATSSGIGRPVARLLHPRVPSRPTVICL.

It localises to the plastid. The protein resides in the chloroplast stroma. The protein localises to the chloroplast nucleoid. In terms of biological role, plays an essential role in early steps of chloroplast development. May be involved in the redox control of plastid gene expression by maintening the redox state around chloroplast nucleoids. May positively regulate plastid-encoded RNA polymerase (PEP) activity. The protein is Protein PEP-RELATED DEVELOPMENT ARRESTED 1 homolog, chloroplastic of Oryza sativa subsp. japonica (Rice).